A 202-amino-acid chain; its full sequence is Small ribosomal subunit protein uS3 (202 aa).

One can recognise a KH type-2 domain in the interval 18–87 (LNEYLQRQLV…NPQIDVVEVP (70 aa)).

It belongs to the universal ribosomal protein uS3 family. In terms of assembly, part of the 30S ribosomal subunit.

Binds the lower part of the 30S subunit head. The protein is Small ribosomal subunit protein uS3 of Thermofilum pendens (strain DSM 2475 / Hrk 5).